Here is a 343-residue protein sequence, read N- to C-terminus: Aspartate carbamoyltransferase catalytic subunit (343 aa).

Residues R54 and T55 each coordinate carbamoyl phosphate. Residue K82 participates in L-aspartate binding. Carbamoyl phosphate-binding residues include R104, H134, and Q137. 2 residues coordinate L-aspartate: R177 and R232. Carbamoyl phosphate contacts are provided by G277 and P278. The tract at residues 323–343 (PDQSNPQRNVTNTSNWQETKR) is disordered.

The protein belongs to the aspartate/ornithine carbamoyltransferase superfamily. ATCase family. As to quaternary structure, heterododecamer (2C3:3R2) of six catalytic PyrB chains organized as two trimers (C3), and six regulatory PyrI chains organized as three dimers (R2).

The enzyme catalyses carbamoyl phosphate + L-aspartate = N-carbamoyl-L-aspartate + phosphate + H(+). Its pathway is pyrimidine metabolism; UMP biosynthesis via de novo pathway; (S)-dihydroorotate from bicarbonate: step 2/3. Functionally, catalyzes the condensation of carbamoyl phosphate and aspartate to form carbamoyl aspartate and inorganic phosphate, the committed step in the de novo pyrimidine nucleotide biosynthesis pathway. In Renibacterium salmoninarum (strain ATCC 33209 / DSM 20767 / JCM 11484 / NBRC 15589 / NCIMB 2235), this protein is Aspartate carbamoyltransferase catalytic subunit.